Consider the following 404-residue polypeptide: Formate-dependent phosphoribosylglycinamide formyltransferase (404 aa).

Residues 25 to 26 and Glu85 contribute to the N(1)-(5-phospho-beta-D-ribosyl)glycinamide site; that span reads EL. Residues Arg118, Lys159, 164–169, 199–202, and Glu207 each bind ATP; these read SSGKGQ and EGFI. Residues 123–318 form the ATP-grasp domain; it reads RLAAEELGLP…EFELHARAIL (196 aa). Residues Glu277 and Glu289 each contribute to the Mg(2+) site. Residues Asp296, Lys365, and 372–373 contribute to the N(1)-(5-phospho-beta-D-ribosyl)glycinamide site; that span reads RR.

This sequence belongs to the PurK/PurT family. Homodimer.

It carries out the reaction N(1)-(5-phospho-beta-D-ribosyl)glycinamide + formate + ATP = N(2)-formyl-N(1)-(5-phospho-beta-D-ribosyl)glycinamide + ADP + phosphate + H(+). Its pathway is purine metabolism; IMP biosynthesis via de novo pathway; N(2)-formyl-N(1)-(5-phospho-D-ribosyl)glycinamide from N(1)-(5-phospho-D-ribosyl)glycinamide (formate route): step 1/1. Its function is as follows. Involved in the de novo purine biosynthesis. Catalyzes the transfer of formate to 5-phospho-ribosyl-glycinamide (GAR), producing 5-phospho-ribosyl-N-formylglycinamide (FGAR). Formate is provided by PurU via hydrolysis of 10-formyl-tetrahydrofolate. This chain is Formate-dependent phosphoribosylglycinamide formyltransferase, found in Burkholderia pseudomallei (strain 668).